Reading from the N-terminus, the 424-residue chain is Sulfate adenylyltransferase (424 aa).

It belongs to the sulfate adenylyltransferase family.

It carries out the reaction sulfate + ATP + H(+) = adenosine 5'-phosphosulfate + diphosphate. It participates in sulfur metabolism; hydrogen sulfide biosynthesis; sulfite from sulfate: step 1/3. The polypeptide is Sulfate adenylyltransferase (Desulfatibacillum aliphaticivorans).